The following is a 460-amino-acid chain: MGKGDKTHINIVVIGHVDSGKSTTTGHLIYKCGGIDKRTIEKFEKEAQEMGKGSFKYAWVLDKLKAERERGITIDIALWKFETAKFYVTIIDAPGHRDFIKNMITGTSQADCAVLVVACGTGEFEAGISKNGQTREHALLAQTLGVKQMIVACNKMDSTEPPFSEKRFDEIVTEVKSFLKKVGYNPATIPFVPISGFNGDNMLEPSSNMSWYKGWSVERKEGNASGKTLIEALDCIIPPQRPTDRPLRLPLQDVYKIGGIGTVPVGRVETGVIKPGMVVTFAPQNVTTEVKSVEMHHESLPEASPGDNVGFNVKNVSVKDIRRGSVCSDSKNDPAKESKNFTAQVIVMNHPGQISAGYTPVLDCHTAHIACKFAELKEKVDRRTGKSTEASPKFLKSGDAGIVELIPTKPPCVESFTDYAPLGRFAVRDMRQTVAVGVIKSVTKDDGSGGKVTKSAAKKK.

The region spanning 6-243 is the tr-type G domain; the sequence is KTHINIVVIG…DCIIPPQRPT (238 aa). Residues 15 to 22 are G1; it reads GHVDSGKS. Residues 71 to 75 form a G2 region; the sequence is GITID. Residues 92–95 form a G3 region; the sequence is DAPG. A G4 region spans residues 154–157; it reads NKMD. The tract at residues 195–197 is G5; the sequence is SGF. 2 positions are modified to 5-glutamyl glycerylphosphorylethanolamine: Glu302 and Glu375.

It belongs to the TRAFAC class translation factor GTPase superfamily. Classic translation factor GTPase family. EF-Tu/EF-1A subfamily.

The protein resides in the cytoplasm. In terms of biological role, this protein promotes the GTP-dependent binding of aminoacyl-tRNA to the A-site of ribosomes during protein biosynthesis. The polypeptide is Elongation factor 1-alpha 3 (eft-3) (Oscheius tipulae).